Here is a 201-residue protein sequence, read N- to C-terminus: 3-isopropylmalate dehydratase small subunit (201 aa).

This sequence belongs to the LeuD family. LeuD type 1 subfamily. As to quaternary structure, heterodimer of LeuC and LeuD.

It catalyses the reaction (2R,3S)-3-isopropylmalate = (2S)-2-isopropylmalate. The protein operates within amino-acid biosynthesis; L-leucine biosynthesis; L-leucine from 3-methyl-2-oxobutanoate: step 2/4. Functionally, catalyzes the isomerization between 2-isopropylmalate and 3-isopropylmalate, via the formation of 2-isopropylmaleate. The sequence is that of 3-isopropylmalate dehydratase small subunit from Escherichia coli O157:H7.